The chain runs to 747 residues: Anoctamin-9 (747 aa).

Over 1–193 (MQDDESSQIF…LYFTWLGWYT (193 aa)) the chain is Cytoplasmic. Residues 194–214 (YMLVPAAVVGLIVFLSGFALF) traverse the membrane as a helical segment. Over 215-259 (DSSQISKEICSANDIFMCPLGDHSHRYLRLSEMCTFAKLTHLFDN) the chain is Extracellular. S245 is modified (phosphoserine; by PKA). Residues 260–280 (EGTVLFAIFMALWATVFLEIW) form a helical membrane-spanning segment. The Cytoplasmic segment spans residues 281–326 (KRKRAHEVQSWKLYEWDEEEEEMALELINSPHYKLKDHRHSYLSST). The helical transmembrane segment at 327-347 (IILILSLFMICLMIGMAHVLV) threads the bilayer. The Extracellular portion of the chain corresponds to 348–364 (VYRVLAGALFSSLVKQQ). Residues 365 to 385 (VTTAVVVTGAVVHYIIIVIMT) traverse the membrane as a helical segment. The Cytoplasmic segment spans residues 386-414 (KVNKYVALKLCKFEESGTFSEQERKFTVK). The helical transmembrane segment at 415 to 435 (FFILQFFAHFSSLIYIAFILG) threads the bilayer. The Extracellular portion of the chain corresponds to 436–543 (RINGHPGKST…EMMIQYGFTT (108 aa)). Residues 544-564 (IFVAAFPLAPLLALFSNLVEI) form a helical membrane-spanning segment. At 565 to 595 (RLDAIKMVRLQRRLVPRKAKDIGTWLQVLET) the chain is on the cytoplasmic side. The helical transmembrane segment at 596–616 (IGVLAVIANGMVIAFTSEFIP) threads the bilayer. At 617-695 (RVVYKYHYGP…FWFILAIRLT (79 aa)) the chain is on the extracellular side. Residues N630, N643, N665, and N681 are each glycosylated (N-linked (GlcNAc...) asparagine). The chain crosses the membrane as a helical span at residues 696 to 716 (FVILFEHFALCIKLIAAWFVP). Residues 717-747 (DVPQKVKNEVLQEKYDRIRHRMRFSSRSTDV) lie on the Cytoplasmic side of the membrane.

This sequence belongs to the anoctamin family. Post-translationally, phosphorylation on Ser-245 by cAMP-dependent protein kinase A (PKA)is essential for activation of its cation channel activity. As to expression, highly expressed in the olfactory epithelium, particularly in mature olfactory sensory neurons (at protein level). Expressed in the kidney (at protein level). Predominant expression seen in epithelial tissues. Highly expressed in the small intestine, colon and stomach.

Its subcellular location is the cell membrane. The protein localises to the endoplasmic reticulum. It catalyses the reaction a 1,2-diacyl-sn-glycero-3-phospho-L-serine(in) = a 1,2-diacyl-sn-glycero-3-phospho-L-serine(out). The catalysed reaction is a beta-D-galactosyl-(1&lt;-&gt;1')-N-acylsphing-4-enine(out) = a beta-D-galactosyl-(1&lt;-&gt;1')-N-acylsphing-4-enine(in). The enzyme catalyses a 1,2-diacyl-sn-glycero-3-phosphocholine(in) = a 1,2-diacyl-sn-glycero-3-phosphocholine(out). It carries out the reaction Ca(2+)(in) = Ca(2+)(out). It catalyses the reaction Na(+)(in) = Na(+)(out). The catalysed reaction is K(+)(in) = K(+)(out). With respect to regulation, cation channel activity is activated via phosphorylation on Ser-245 by cAMP-dependent protein kinase A (PKA). Inhibited by NaCl. In terms of biological role, PKA-activated nonselective cation channel. Discriminates poorly among cations but is more permeable to Ca(2+) ions than to monovalent cations. Acts as a calcium-activated calcium permeable channel which may operate as a endoplasmic reticulum (ER) Ca(2+)-leak channel, reducing the loading of the ER Ca(2+) store. Regulates intracellular Ca2+ signals, ion channel activity, and cytokine release in the renal tissue. Plays an important role in olfaction, amplifying cAMP-evoked cyclic nucleotide-gated (CNG) channel currents in the olfactory sensory neurons. Has calcium-dependent phospholipid scramblase activity; scrambles phosphatidylserine, phosphatidylcholine and galactosylceramide. Does not exhibit calcium-activated chloride channel (CaCC) activity. Can inhibit the activity of ANO1. The sequence is that of Anoctamin-9 from Mus musculus (Mouse).